A 496-amino-acid polypeptide reads, in one-letter code: 1-aminocyclopropane-1-carboxylate synthase 4 (496 aa).

K300 carries the post-translational modification N6-(pyridoxal phosphate)lysine.

Belongs to the class-I pyridoxal-phosphate-dependent aminotransferase family. Requires pyridoxal 5'-phosphate as cofactor. In terms of tissue distribution, expressed in leaves. Expressed in shoots and leaf blades. Expressed at low levels in leaf sheaths.

The enzyme catalyses S-adenosyl-L-methionine = 1-aminocyclopropane-1-carboxylate + S-methyl-5'-thioadenosine + H(+). The protein operates within alkene biosynthesis; ethylene biosynthesis via S-adenosyl-L-methionine; ethylene from S-adenosyl-L-methionine: step 1/2. Its function is as follows. Catalyzes the formation of 1-aminocyclopropane-1-carboxylate, a direct precursor of ethylene in higher plants. This chain is 1-aminocyclopropane-1-carboxylate synthase 4, found in Oryza sativa subsp. japonica (Rice).